The sequence spans 830 residues: Leucine--tRNA ligase (830 aa).

The 'HIGH' region signature appears at 34 to 44 (PYPSGNIHMGH). Residues 592-596 (KMSKS) carry the 'KMSKS' region motif. Lys595 contacts ATP.

It belongs to the class-I aminoacyl-tRNA synthetase family.

It is found in the cytoplasm. The enzyme catalyses tRNA(Leu) + L-leucine + ATP = L-leucyl-tRNA(Leu) + AMP + diphosphate. The polypeptide is Leucine--tRNA ligase (Ehrlichia ruminantium (strain Gardel)).